A 177-amino-acid polypeptide reads, in one-letter code: Gamma-crystallin M1-2 (177 aa).

Beta/gamma crystallin 'Greek key' domains are found at residues 2–40 and 41–83; these read GKII…RVEN and GCWM…RLLS. The connecting peptide stretch occupies residues 84–90; sequence QNLGIGT. Beta/gamma crystallin 'Greek key' domains follow at residues 91–131 and 132–174; these read NKLR…NVLD and GYWI…RRVI.

This sequence belongs to the beta/gamma-crystallin family. As to quaternary structure, monomer.

Crystallins are the dominant structural components of the vertebrate eye lens. The polypeptide is Gamma-crystallin M1-2 (Aquarana catesbeiana (American bullfrog)).